Consider the following 423-residue polypeptide: Kynureninase (423 aa).

Residues Leu105, Ser106, 133–136 (FPSD), Asp218, His221, and Tyr243 each bind pyridoxal 5'-phosphate. Lys244 is modified (N6-(pyridoxal phosphate)lysine). Trp273 and Asn301 together coordinate pyridoxal 5'-phosphate.

It belongs to the kynureninase family. In terms of assembly, homodimer. It depends on pyridoxal 5'-phosphate as a cofactor.

The catalysed reaction is L-kynurenine + H2O = anthranilate + L-alanine + H(+). It catalyses the reaction 3-hydroxy-L-kynurenine + H2O = 3-hydroxyanthranilate + L-alanine + H(+). The protein operates within amino-acid degradation; L-kynurenine degradation; L-alanine and anthranilate from L-kynurenine: step 1/1. It participates in cofactor biosynthesis; NAD(+) biosynthesis; quinolinate from L-kynurenine: step 2/3. Its function is as follows. Catalyzes the cleavage of L-kynurenine (L-Kyn) and L-3-hydroxykynurenine (L-3OHKyn) into anthranilic acid (AA) and 3-hydroxyanthranilic acid (3-OHAA), respectively. The chain is Kynureninase from Xanthomonas axonopodis pv. citri (strain 306).